The primary structure comprises 2647 residues: Filamin-A (2647 aa).

The tract at residues 1–37 (MSSSHSRCGQSAAVASPGGSIDSRDAEMPATEKDLAE) is disordered. N-acetylserine is present on Ser-2. Residues 2-274 (SSSHSRCGQS…PKAKLKPGAP (273 aa)) form an actin-binding region. Phosphoserine occurs at positions 11, 16, and 20. The span at 22 to 37 (DSRDAEMPATEKDLAE) shows a compositional bias: basic and acidic residues. Residues Lys-42, Lys-43, and Lys-135 each participate in a glycyl lysine isopeptide (Lys-Gly) (interchain with G-Cter in ubiquitin) cross-link. 2 Calponin-homology (CH) domains span residues 43-149 (KIQQ…LHYS) and 166-269 (QTPK…KAKL). The tract at residues 271-294 (PGAPLRPKLNPKKARAYGPGIEPT) is disordered. Filamin repeat units follow at residues 276–374 (RPKL…EVYV), 376–474 (KSQG…TVTV), 475–570 (GQAC…EVKV), 571–663 (GTEC…MADI), 667–763 (PQDF…RVNV), 764–866 (GAGS…RVKV), 867–965 (EPSH…SVGV), 966–1061 (SPSL…PLEA), 1062–1154 (VAPT…KAHV), 1155–1249 (APCF…KLQV), 1250–1349 (EPAV…QVPV), 1350–1442 (TEGC…KVPV), 1443–1539 (HDVT…KVKV), 1540–1636 (LPTH…RVRA), and 1641–1740 (DASK…QVTA). A Glycyl lysine isopeptide (Lys-Gly) (interchain with G-Cter in SUMO1); alternate cross-link involves residue Lys-299. Lys-299 participates in a covalent cross-link: Glycyl lysine isopeptide (Lys-Gly) (interchain with G-Cter in SUMO2); alternate. Residues Lys-376 and Lys-508 each carry the N6-acetyllysine modification. 5 positions are modified to N6-acetyllysine: Lys-700, Lys-781, Lys-837, Lys-865, and Lys-906. Ser-968 and Ser-1055 each carry phosphoserine. Lys-1071 is subject to N6-acetyllysine; alternate. Lys-1071 bears the N6-succinyllysine; alternate mark. At Ser-1084 the chain carries Phosphoserine. At Thr-1089 the chain carries Phosphothreonine. A phosphoserine mark is found at Ser-1301 and Ser-1338. Residue Lys-1372 is modified to N6-acetyllysine. Phosphoserine occurs at positions 1459 and 1533. The interval 1490-1607 (PKGLVEPVDV…DNHDGTYTVA (118 aa)) is interaction with furin. Residue Lys-1538 is modified to N6-acetyllysine. Phosphoserine is present on residues Ser-1630 and Ser-1734. The tract at residues 1741 to 1778 (LAGDQPTVQTPLRSQQLAPQYNYPQGSQQTWIPERPMV) is hinge 1. Thr-1750 is subject to Phosphothreonine. Filamin repeat units lie at residues 1765 to 1860 (QGSQ…QFYV), 1861 to 1952 (DYVN…TARV), 1953 to 2039 (TGDD…PVVI), 2042 to 2134 (SEIG…SVKV), 2135 to 2230 (TGEG…QFTV), 2233 to 2325 (LGEG…VVPV), 2327 to 2420 (SPSG…KIRV), and 2424 to 2516 (GHGG…KAKV). The residue at position 1835 (Ser-1835) is a Phosphoserine. Ser-1967, Ser-2053, Ser-2128, Ser-2152, Ser-2158, Ser-2163, Ser-2180, Ser-2284, Ser-2327, and Ser-2329 each carry phosphoserine. Residue Thr-2336 is modified to Phosphothreonine. Phosphoserine is present on residues Ser-2338, Ser-2370, Ser-2414, Ser-2510, Ser-2523, and Ser-2526. Residues 2517-2553 (TGPRLVSNHSLHETSSVFVDSLTKVATVPQHATSGPG) are hinge 2. The tract at residues 2517–2647 (TGPRLVSNHS…PGSPYRIMVP (131 aa)) is self-association site, tail. The stretch at 2552–2646 (PGPADVSKVV…IPGSPYRIMV (95 aa)) is one Filamin 24 repeat. Position 2569 is an N6-acetyllysine; alternate (Lys-2569). N6-succinyllysine; alternate is present on Lys-2569. Residue Lys-2575 is modified to N6-acetyllysine. Thr-2599 carries the post-translational modification Phosphothreonine. N6-acetyllysine is present on residues Lys-2607 and Lys-2621.

This sequence belongs to the filamin family. In terms of assembly, homodimer. Interacts with FCGR1A, FLNB, FURIN, HSPB7, KCND2, INPPL1, MYOT, MYOZ1, PDLIM2, ARHGAP24, PSEN1, PSEN2 and ECSCR. Also interacts with various other binding partners in addition to filamentous actin. Interacts (via N-terminus) with TAF1B. Interacts (via N-terminus) with MIS18BP1 (via N-terminus). Interacts with TMEM67 (via C-terminus) and MKS1. Interacts (via actin-binding domain) with MICALL2 (via calponin-homology (CH) domain). Interacts with RFLNA and RFLNB. Interacts (via filamin repeat 5) with SYK; docks SYK to the plasma membrane. Interacts (via filamin repeats 19 and 21) with DRD3; increased PKA-mediated phosphorylation at Ser-2152. Interacts (via filamin repeat 21) with MAS1, AGTR1 and ADRA1D; increases PKA-mediated phosphorylation of FLNA at Ser-2152. Interacts (via filamin repeats 4, 9, 12, 17, 19, 21, and 23) with GP1BA (high affinity), ITGB7, ITGB2 and FBLIM1. Interacts with CEACAM1 (via cytoplasmic domain); inhibits cell migration and cell scattering by interfering with the interaction between FLNA and RALA. Interacts with FOXC1. Interacts (via calponin-homology (CH) domain 1 and filamin repeat 24) with CRMP1; the interaction alters FLNA ternary structure and thus promotes FLNA dissociation from F-actin. Interacts with DPYSL3/CRMP3 and DPYSL4/CRMP4. In terms of processing, phosphorylation at Ser-2152 is negatively regulated by the autoinhibited conformation of filamin repeats 19-21. Ligand binding induces a conformational switch triggering phosphorylation at Ser-2152 by PKA. Polyubiquitination in the CH1 domain by a SCF-like complex containing ASB2 leads to proteasomal degradation. Prior dissociation from actin may be required to expose the target lysines. Ubiquitinated in endothelial cells by RNF213 downstream of the non-canonical Wnt signaling pathway, leading to its degradation by the proteasome. Widely expressed. Highly expressed in Purkinje cells.

The protein resides in the cytoplasm. The protein localises to the cell cortex. Its subcellular location is the cytoskeleton. It localises to the perikaryon. It is found in the cell projection. The protein resides in the growth cone. The protein localises to the podosome. Its function is as follows. Actin binding protein that promotes orthogonal branching of actin filaments and links actin filaments to membrane glycoproteins. Anchors various transmembrane proteins to the actin cytoskeleton and serves as a scaffold for a wide range of cytoplasmic signaling proteins. Interaction with FLNB may allow neuroblast migration from the ventricular zone into the cortical plate. Tethers cell surface-localized furin, modulates its rate of internalization and directs its intracellular trafficking. Involved in ciliogenesis. Plays a role in cell-cell contacts and adherens junctions during the development of blood vessels, heart and brain organs. Plays a role in platelets morphology through interaction with SYK that regulates ITAM- and ITAM-like-containing receptor signaling, resulting in by platelet cytoskeleton organization maintenance. During the axon guidance process, required for growth cone collapse induced by SEMA3A-mediated stimulation of neurons. The protein is Filamin-A (Flna) of Mus musculus (Mouse).